We begin with the raw amino-acid sequence, 291 residues long: Diaminopimelate epimerase (291 aa).

Substrate contacts are provided by Asn11 and Asn78. Cys87 serves as the catalytic Proton donor. Substrate-binding positions include 88 to 89, Asn166, Asn200, and 218 to 219; these read GN and ER. Cys227 functions as the Proton acceptor in the catalytic mechanism. Residue 228–229 coordinates substrate; it reads GT.

It belongs to the diaminopimelate epimerase family. Homodimer.

It localises to the cytoplasm. It catalyses the reaction (2S,6S)-2,6-diaminopimelate = meso-2,6-diaminopimelate. It functions in the pathway amino-acid biosynthesis; L-lysine biosynthesis via DAP pathway; DL-2,6-diaminopimelate from LL-2,6-diaminopimelate: step 1/1. Catalyzes the stereoinversion of LL-2,6-diaminopimelate (L,L-DAP) to meso-diaminopimelate (meso-DAP), a precursor of L-lysine and an essential component of the bacterial peptidoglycan. This chain is Diaminopimelate epimerase, found in Mycolicibacterium smegmatis (strain ATCC 700084 / mc(2)155) (Mycobacterium smegmatis).